Reading from the N-terminus, the 364-residue chain is Growth hormone secretagogue receptor type 1 (364 aa).

Topologically, residues 1 to 40 (MWNATPSEEPEPNVTLDLDWDASPGNDSLPDELLPLFPAP) are extracellular. N-linked (GlcNAc...) asparagine glycosylation is found at asparagine 13 and asparagine 26. The chain crosses the membrane as a helical span at residues 41 to 66 (LLAGVTATCVALFVVGISGNLLTMLV). At 67-72 (VSRFRE) the chain is on the cytoplasmic side. Residues 73–96 (LRTTTNLYLSSMAFSDLLIFLCMP) traverse the membrane as a helical segment. Topologically, residues 97-117 (LDLVRLWQYRPWNFGDLLCKL) are extracellular. The cysteines at positions 115 and 197 are disulfide-linked. A helical transmembrane segment spans residues 118–139 (FQFVSESCTYATVLTITALSVE). Residues 140-162 (RYFAICFPLRAKVVVTKGRVKLV) lie on the Cytoplasmic side of the membrane. The helical transmembrane segment at 163-183 (ILVIWAVAFCSAGPIFVLVGV) threads the bilayer. At 184 to 211 (EHENGTDPRDTNECRATEFAVRSGLLTV) the chain is on the extracellular side. N-linked (GlcNAc...) asparagine glycosylation occurs at asparagine 187. A helical transmembrane segment spans residues 212–235 (MVWVSSVFFFLPVFCLTVLYSLIG). Over 236–263 (RKLWRRRGDAAVGASLRDQNHKQTVKML) the chain is Cytoplasmic. Residues 264-285 (AVVVFAFILCWLPFHVGRYLFS) traverse the membrane as a helical segment. At 286–302 (KSFEPGSLEIAQISQYC) the chain is on the extracellular side. A helical transmembrane segment spans residues 303 to 326 (NLVSFVLFYLSAAINPILYNIMSK). At 327–364 (KYRVAVFKLLGFESFSQRKLSTLKDESSRAWTKSSINT) the chain is on the cytoplasmic side.

Belongs to the G-protein coupled receptor 1 family.

The protein localises to the cell membrane. Receptor for ghrelin, coupled to G-alpha-11 proteins. Stimulates growth hormone secretion. Also binds other growth hormone releasing peptides (GHRP) (e.g. Met-enkephalin and GHRP-6) as well as non-peptide, low molecular weight secretagogues (e.g. L-692,429, MK-0677, adenosine). The polypeptide is Growth hormone secretagogue receptor type 1 (Ghsr) (Rattus norvegicus (Rat)).